The following is a 380-amino-acid chain: Homoserine O-acetyltransferase (380 aa).

Residues 59 to 363 enclose the AB hydrolase-1 domain; the sequence is NVVMVLHALT…IYGHDGFLVE (305 aa). S164 acts as the Nucleophile in catalysis. R234 contributes to the substrate binding site. Active-site residues include D327 and H357. D358 contributes to the substrate binding site.

This sequence belongs to the AB hydrolase superfamily. MetX family. Homodimer.

It localises to the cytoplasm. The catalysed reaction is L-homoserine + acetyl-CoA = O-acetyl-L-homoserine + CoA. It participates in amino-acid biosynthesis; L-methionine biosynthesis via de novo pathway; O-acetyl-L-homoserine from L-homoserine: step 1/1. Functionally, transfers an acetyl group from acetyl-CoA to L-homoserine, forming acetyl-L-homoserine. The chain is Homoserine O-acetyltransferase from Mycolicibacterium smegmatis (strain ATCC 700084 / mc(2)155) (Mycobacterium smegmatis).